A 205-amino-acid chain; its full sequence is Dephospho-CoA kinase (205 aa).

The DPCK domain occupies 5–201 (VVGLTGGIGS…QRYLQLSGNH (197 aa)). 13-18 (GSGKTT) is an ATP binding site.

Belongs to the CoaE family.

It localises to the cytoplasm. The catalysed reaction is 3'-dephospho-CoA + ATP = ADP + CoA + H(+). The protein operates within cofactor biosynthesis; coenzyme A biosynthesis; CoA from (R)-pantothenate: step 5/5. Its function is as follows. Catalyzes the phosphorylation of the 3'-hydroxyl group of dephosphocoenzyme A to form coenzyme A. The sequence is that of Dephospho-CoA kinase from Shewanella oneidensis (strain ATCC 700550 / JCM 31522 / CIP 106686 / LMG 19005 / NCIMB 14063 / MR-1).